We begin with the raw amino-acid sequence, 561 residues long: DNA ligase B (561 aa).

Catalysis depends on K125, which acts as the N6-AMP-lysine intermediate.

It belongs to the NAD-dependent DNA ligase family. LigB subfamily.

It catalyses the reaction NAD(+) + (deoxyribonucleotide)n-3'-hydroxyl + 5'-phospho-(deoxyribonucleotide)m = (deoxyribonucleotide)n+m + AMP + beta-nicotinamide D-nucleotide.. In terms of biological role, catalyzes the formation of phosphodiester linkages between 5'-phosphoryl and 3'-hydroxyl groups in double-stranded DNA using NAD as a coenzyme and as the energy source for the reaction. The polypeptide is DNA ligase B (Salmonella newport (strain SL254)).